We begin with the raw amino-acid sequence, 150 residues long: UPF0756 membrane protein ACICU_02320 (150 aa).

4 helical membrane passes run 1–21 (MLAQ…CGLL), 45–65 (FFPY…TIGV), 83–103 (FISF…WLGG), and 115–135 (VVAG…GVPV).

This sequence belongs to the UPF0756 family.

It is found in the cell membrane. The sequence is that of UPF0756 membrane protein ACICU_02320 from Acinetobacter baumannii (strain ACICU).